The chain runs to 352 residues: Histidinol-phosphate aminotransferase 1 (352 aa).

Lysine 211 carries the post-translational modification N6-(pyridoxal phosphate)lysine.

This sequence belongs to the class-II pyridoxal-phosphate-dependent aminotransferase family. Histidinol-phosphate aminotransferase subfamily. As to quaternary structure, homodimer. It depends on pyridoxal 5'-phosphate as a cofactor.

It carries out the reaction L-histidinol phosphate + 2-oxoglutarate = 3-(imidazol-4-yl)-2-oxopropyl phosphate + L-glutamate. It participates in amino-acid biosynthesis; L-histidine biosynthesis; L-histidine from 5-phospho-alpha-D-ribose 1-diphosphate: step 7/9. The chain is Histidinol-phosphate aminotransferase 1 from Haemophilus influenzae (strain 86-028NP).